Here is a 349-residue protein sequence, read N- to C-terminus: 4-hydroxy-2-oxovalerate aldolase 2 (349 aa).

Residues 12-264 (VRMTDTSLRD…KTGIDFFDIA (253 aa)) form the Pyruvate carboxyltransferase domain. Residue 20–21 (RD) coordinates substrate. Residue Asp-21 coordinates Mn(2+). The Proton acceptor role is filled by His-24. Residues Ser-174 and His-203 each coordinate substrate. Positions 203 and 205 each coordinate Mn(2+). Tyr-294 contacts substrate.

This sequence belongs to the 4-hydroxy-2-oxovalerate aldolase family.

The enzyme catalyses (S)-4-hydroxy-2-oxopentanoate = acetaldehyde + pyruvate. In Mycolicibacterium smegmatis (strain ATCC 700084 / mc(2)155) (Mycobacterium smegmatis), this protein is 4-hydroxy-2-oxovalerate aldolase 2 (bphI-2).